The chain runs to 545 residues: Probable quinate permease (545 aa).

The Cytoplasmic portion of the chain corresponds to 1-22 (MSILSLVEDRPTPKEVYNWRIY). A helical transmembrane segment spans residues 23–43 (LLAAVASFTSCMIGYDSAFIG). Residues 44–66 (TTISLQSFKDEFNWDAMSTDKQN) lie on the Extracellular side of the membrane. Residues 67–87 (LISANIVSLYQAGAFFGAFFA) traverse the membrane as a helical segment. The Cytoplasmic segment spans residues 88 to 97 (YPMGHFWGRR). A helical transmembrane segment spans residues 98–118 (WGLFVAALVFTLGAGLMLGAN). Residues 119–130 (GDRGLGLIYGGR) lie on the Extracellular side of the membrane. Residues 131 to 151 (VLAGLGVGAGSNITPIYISEL) traverse the membrane as a helical segment. The Cytoplasmic portion of the chain corresponds to 152–159 (APPAIRGR). Residues 160–180 (LVGVYELGWQIGGLVGFWICF) form a helical membrane-spanning segment. The Extracellular segment spans residues 181–193 (GVDDTLAPSHKQW). The helical transmembrane segment at 194 to 214 (IIPFAVQLIPSGLLLLGILFV) threads the bilayer. Residues 215 to 285 (RESPRWLFLR…VWSNKRIMYR (71 aa)) are Cytoplasmic-facing. The chain crosses the membrane as a helical span at residues 286–306 (LFLGSMLFLWQNGSGINAINY). Residues 307–325 (YSPTVFKSIGLRGANTSLL) are Extracellular-facing. The helical transmembrane segment at 326 to 346 (TTGIFGVVKTVVTFVWLLWLI) threads the bilayer. At 347–352 (DRLGRR) the chain is on the cytoplasmic side. Residues 353–373 (LLLMIGAAGGSVCLWIVGAYI) traverse the membrane as a helical segment. At 374 to 384 (KVAKPTERDPD) the chain is on the extracellular side. Residues 385 to 405 (APLDGGGIAAMFFFYLWTVFY) traverse the membrane as a helical segment. Residues 406 to 457 (TPSWNGTPWVMNSEMFDPNVRSLAQACAAGSNWLWNFLISRFTPQMFAKMEY) are Cytoplasmic-facing. The helical transmembrane segment at 458–478 (GVYFFFASLMILSIVFVFFLI) threads the bilayer. Over 479-545 (PETKGIPLES…VEQAESVPKA (67 aa)) the chain is Extracellular. The disordered stretch occupies residues 520 to 545 (IEESGYTKSDAQQVERVEQAESVPKA).

The protein belongs to the major facilitator superfamily. Sugar transporter (TC 2.A.1.1) family. In terms of assembly, interacts with creB. In terms of processing, ubiquitinated. Deubiquitinated by creB, probably to control its activity or amount.

Its subcellular location is the cell membrane. Its function is as follows. Integral membrane transporter that imports quinic acid to be catabolized as a carbon source. The chain is Probable quinate permease (qutD) from Aspergillus terreus (strain NIH 2624 / FGSC A1156).